Here is a 526-residue protein sequence, read N- to C-terminus: Cyclin-L1 (526 aa).

The tract at residues 1–36 is disordered; sequence MASGPHSTATAAAAASSAAPSAGGSSSGTTTTTTTT. Cyclin-like regions lie at residues 88–190 and 203–287; these read ELIQ…RVLK and KIIV…ETLR. Residues 318–526 are disordered; the sequence is KGLNPDGTPA…SRSGHGRHRR (209 aa). At Thr-325 the chain carries Phosphothreonine. Residues Ser-335 and Ser-338 each carry the phosphoserine modification. Glycyl lysine isopeptide (Lys-Gly) (interchain with G-Cter in SUMO2) cross-links involve residues Lys-339 and Lys-347. Over residues 342–352 the composition is skewed to basic and acidic residues; sequence SPREVKAEEKS. Residues Ser-352 and Ser-355 each carry the phosphoserine modification. Basic and acidic residues predominate over residues 361–370; it reads VKKEPEDRQQ. A Glycyl lysine isopeptide (Lys-Gly) (interchain with G-Cter in SUMO2) cross-link involves residue Lys-362. Ser-374 carries the post-translational modification Phosphoserine. Composition is skewed to basic residues over residues 382-418, 438-452, 460-476, and 486-498; these read DSKR…RRSR, RRHH…KAKH, SNRH…RSQS, and KKHR…HRDR. An RS region spans residues 390–432; that stretch reads RSASRSRSRTRSRSRSHTPRRHYNNRRSRSGTYSSRSRSRSRS. Position 445 is a phosphoserine (Ser-445). Residues 499 to 508 show a composition bias toward basic and acidic residues; it reads RERSRSFERS. Residues 509–526 are compositionally biased toward basic residues; that stretch reads HKSKHHGGSRSGHGRHRR.

It belongs to the cyclin family. Cyclin L subfamily. As to quaternary structure, (Microbial infection) Interacts with human herpes virus 1 (HHV-1) transcriptional regulator ICP22. Interacts with POLR2A via its hyperphosphorylated C-terminal domain (CTD). Interacts with CDK11A, CDK12 and CDK13. Isoforms 1 and 2, but not isoform 3, interact with CDK11B. May form a ternary complex with CDK11B and casein kinase II (CKII). Interacts with pre-mRNA-splicing factors, including at least SRSF1, SRSF2 and SRSF7/SLU7. Widely expressed. Overexpression in primary tumors of head and neck squamous cell carcinomas (HNSCC).

The protein localises to the nucleus speckle. The protein resides in the nucleus. It localises to the nucleoplasm. Functionally, involved in pre-mRNA splicing. Functions in association with cyclin-dependent kinases (CDKs). Inhibited by the CDK-specific inhibitor CDKN1A/p21. May play a role in the regulation of RNA polymerase II (pol II). May be a candidate proto-oncogene in head and neck squamous cell carcinomas (HNSCC). The protein is Cyclin-L1 (CCNL1) of Homo sapiens (Human).